Reading from the N-terminus, the 206-residue chain is Ras-related protein Rab-18 (206 aa).

An N-acetylmethionine modification is found at methionine 1. Residues serine 17, glycine 20, lysine 21, serine 22, serine 23, aspartate 34, proline 35, threonine 40, glycine 66, lysine 123, and aspartate 125 each contribute to the GTP site. Residue serine 22 participates in Mg(2+) binding. 2 consecutive short sequence motifs (switch) follow at residues 31–45 (DTFD…GVDF) and 63–80 (DTAG…YYRG). Threonine 40 is a binding site for Mg(2+). At serine 144 the chain carries Phosphoserine. Alanine 152 is a binding site for GTP. Cysteine 199 carries S-palmitoyl cysteine lipidation. Cysteine 203 is subject to Cysteine methyl ester. The S-geranylgeranyl cysteine moiety is linked to residue cysteine 203. Positions 204-206 (SVL) are cleaved as a propeptide — removed in mature form.

This sequence belongs to the small GTPase superfamily. Rab family. Interacts (in GTP-bound form) with ZFYVE1. Interacts with ZW10 and this interaction is enhanced in the presence of ZFYVE1. Interacts with BSCL2. Requires Mg(2+) as cofactor.

The protein localises to the endoplasmic reticulum membrane. It localises to the golgi apparatus. The protein resides in the cis-Golgi network membrane. Its subcellular location is the lipid droplet. It is found in the apical cell membrane. The enzyme catalyses GTP + H2O = GDP + phosphate + H(+). Regulated by guanine nucleotide exchange factors (GEFs) which promote the exchange of bound GDP for free GTP. Regulated by GTPase activating proteins (GAPs) which increase the GTP hydrolysis activity at the ER membrane. Inhibited by GDP dissociation inhibitors (GDIs) which prevent Rab-GDP dissociation. In terms of biological role, the small GTPases Rab are key regulators of intracellular membrane trafficking, from the formation of transport vesicles to their fusion with membranes. Rabs cycle between an inactive GDP-bound form and an active GTP-bound form that is able to recruit to membranes different sets of downstream effectors directly responsible for vesicle formation, movement, tethering and fusion. RAB18 is required for the localization of ZFYVE1 to lipid droplets and for its function in mediating the formation of endoplasmic reticulum-lipid droplets (ER-LD) contacts. Also required for maintaining endoplasmic reticulum structure. Plays a role in apical endocytosis/recycling. Plays a key role in eye and brain development and neurodegeneration. The chain is Ras-related protein Rab-18 from Rattus norvegicus (Rat).